The primary structure comprises 67 residues: Large ribosomal subunit protein bL31 (67 aa).

Residues cysteine 16, cysteine 18, cysteine 36, and cysteine 39 each contribute to the Zn(2+) site.

The protein belongs to the bacterial ribosomal protein bL31 family. Type A subfamily. As to quaternary structure, part of the 50S ribosomal subunit. It depends on Zn(2+) as a cofactor.

In terms of biological role, binds the 23S rRNA. This Syntrophomonas wolfei subsp. wolfei (strain DSM 2245B / Goettingen) protein is Large ribosomal subunit protein bL31.